We begin with the raw amino-acid sequence, 875 residues long: Transcription factor tenR (875 aa).

A DNA-binding region (zn(2)-C6 fungal-type) is located at residues 16–44; the sequence is CSECRRRKIRCDRGFPCGPCRKSLPALSC. Disordered stretches follow at residues 54–73, 136–172, and 620–642; these read AASAPPRPHTAQHQPRPKVN, DHEKKESTNHSRARQGYPGSTETINPGSVSHSAGVNP, and PHEDGPRSIQSQISSHAGQTGSR. 2 stretches are compositionally biased toward polar residues: residues 153 to 168 and 627 to 642; these read PGSTETINPGSVSHSA and SIQSQISSHAGQTGSR.

It is found in the nucleus. Transcription factor that positively regulates the expression of the genes that mediate the biosynthesis of tenellin-type 2-pyridones, iron-chelating compounds involved in iron stress tolerance, competition with the natural competitor fungus Metarhizium robertsii and insect hosts infection. This chain is Transcription factor tenR, found in Beauveria bassiana (strain ARSEF 2860) (White muscardine disease fungus).